The primary structure comprises 248 residues: Granzyme-like protein 1 (248 aa).

The N-terminal stretch at 1–18 is a signal peptide; sequence MNLLLLLLTVSLAPTTEA. Positions 19 to 20 are cleaved as a propeptide — activation peptide; the sequence is AE. Positions 21-246 constitute a Peptidase S1 domain; sequence IIGGHEADPH…FLSWIEETMK (226 aa). Cys-50 and Cys-66 form a disulfide bridge. His-65 functions as the Charge relay system in the catalytic mechanism. N-linked (GlcNAc...) asparagine glycosylation is present at Asn-72. Asp-109 serves as the catalytic Charge relay system. 2 disulfide bridges follow: Cys-143-Cys-210 and Cys-174-Cys-189. Ser-204 functions as the Charge relay system in the catalytic mechanism.

It belongs to the peptidase S1 family. Granzyme subfamily. Duodenum.

In terms of biological role, this enzyme is necessary for target cell lysis in cell-mediated immune responses. The protein is Granzyme-like protein 1 of Rattus norvegicus (Rat).